The primary structure comprises 175 residues: Large ribosomal subunit protein uL10 (175 aa).

The protein belongs to the universal ribosomal protein uL10 family. As to quaternary structure, part of the ribosomal stalk of the 50S ribosomal subunit. The N-terminus interacts with L11 and the large rRNA to form the base of the stalk. The C-terminus forms an elongated spine to which L12 dimers bind in a sequential fashion forming a multimeric L10(L12)X complex.

Forms part of the ribosomal stalk, playing a central role in the interaction of the ribosome with GTP-bound translation factors. The polypeptide is Large ribosomal subunit protein uL10 (Synechococcus sp. (strain CC9605)).